Consider the following 313-residue polypeptide: MGNEFQHRTVLLDEAVDALVTRPDGVYVDGTFGRGGHSRAVLARLGYAGRLIAFDKDPRAIETAESIEDARFEIVHDSFAAMKGALDARGIGRVSGVLLDLGVSSPQVDDPARGFSFRANGPLDMRMDPTRGESAAEWLARASVQELTEVIRDYGEERFAFQIAKAIVARRAESDRLGPLDSTGELAQIVGHVVKTREKGKDPATRTFQAIRIHVNQELADLQVVLEAALSLLEQGGRLVVISFHSLEDRIVKRFLQAHASAPAVDRRLPIRAADLPRPPLKLLGRMFPNDAEVAANPRARSAVMRIAERVAP.

S-adenosyl-L-methionine contacts are provided by residues 35 to 37, D55, F79, D100, and Q107; that span reads GGH.

It belongs to the methyltransferase superfamily. RsmH family.

The protein localises to the cytoplasm. The catalysed reaction is cytidine(1402) in 16S rRNA + S-adenosyl-L-methionine = N(4)-methylcytidine(1402) in 16S rRNA + S-adenosyl-L-homocysteine + H(+). Functionally, specifically methylates the N4 position of cytidine in position 1402 (C1402) of 16S rRNA. The protein is Ribosomal RNA small subunit methyltransferase H of Burkholderia pseudomallei (strain K96243).